A 185-amino-acid chain; its full sequence is Large ribosomal subunit protein uL5 (185 aa).

Belongs to the universal ribosomal protein uL5 family. In terms of assembly, part of the 50S ribosomal subunit; part of the 5S rRNA/L5/L18/L25 subcomplex. Contacts the 5S rRNA and the P site tRNA. Forms a bridge to the 30S subunit in the 70S ribosome.

Functionally, this is one of the proteins that bind and probably mediate the attachment of the 5S RNA into the large ribosomal subunit, where it forms part of the central protuberance. In the 70S ribosome it contacts protein S13 of the 30S subunit (bridge B1b), connecting the 2 subunits; this bridge is implicated in subunit movement. Contacts the P site tRNA; the 5S rRNA and some of its associated proteins might help stabilize positioning of ribosome-bound tRNAs. The polypeptide is Large ribosomal subunit protein uL5 (Sinorhizobium medicae (strain WSM419) (Ensifer medicae)).